The following is a 361-amino-acid chain: MAGSQIGTLFQVATFGESHGLALGGVVDGCPAGLELSEADLQGDLNRRRPGQSRFTTQRQERDEVKILSGVFEGRTTGTPIGFIIENEDQRSKDYSEIKDKFRPGHADFTYWSKYGNRDYRGGGRSSARETAIRVAAGAIAKKLLRQAEGVTVRGALTGMGPVVIEPSRWDWAEVERNHFFSPDAGSVGEFEAYLEGIRKAGNSVGAFLEVHAEGVPIGLGEPVFDRLDADLAKAVMSINAVKGVEIGAGMASGHATGVDFADEMRPGVDARHPEFVRNHAGGILGGISTGQPIVIRFAVKPTSSILVPRQSVDVHGQACEVVTKGRHDPCVGIRAVPIAEAMVAMTLADHWLRWRASKPL.

Residues Arg-48 and Arg-54 each coordinate NADP(+). FMN is bound by residues Arg-125–Ser-127, Asn-240–Ala-241, Gly-286, Lys-301–Ser-305, and Arg-327.

This sequence belongs to the chorismate synthase family. Homotetramer. Requires FMNH2 as cofactor.

It catalyses the reaction 5-O-(1-carboxyvinyl)-3-phosphoshikimate = chorismate + phosphate. It participates in metabolic intermediate biosynthesis; chorismate biosynthesis; chorismate from D-erythrose 4-phosphate and phosphoenolpyruvate: step 7/7. Catalyzes the anti-1,4-elimination of the C-3 phosphate and the C-6 proR hydrogen from 5-enolpyruvylshikimate-3-phosphate (EPSP) to yield chorismate, which is the branch point compound that serves as the starting substrate for the three terminal pathways of aromatic amino acid biosynthesis. This reaction introduces a second double bond into the aromatic ring system. This chain is Chorismate synthase, found in Magnetococcus marinus (strain ATCC BAA-1437 / JCM 17883 / MC-1).